A 621-amino-acid chain; its full sequence is tRNA uridine 5-carboxymethylaminomethyl modification enzyme MnmG (621 aa).

An FAD-binding site is contributed by 11 to 16 (GGGHAG). Residue 270–284 (GPRYCPSIEDKINRF) coordinates NAD(+).

It belongs to the MnmG family. As to quaternary structure, homodimer. Heterotetramer of two MnmE and two MnmG subunits. FAD is required as a cofactor.

It localises to the cytoplasm. In terms of biological role, NAD-binding protein involved in the addition of a carboxymethylaminomethyl (cmnm) group at the wobble position (U34) of certain tRNAs, forming tRNA-cmnm(5)s(2)U34. This chain is tRNA uridine 5-carboxymethylaminomethyl modification enzyme MnmG, found in Helicobacter pylori (strain Shi470).